The primary structure comprises 130 residues: Hypocretin neuropeptide precursor (130 aa).

The first 32 residues, 1–32 (MNFPSTKVPWAAVTLLLLLLLPPALLSLGVDA), serve as a signal peptide directing secretion. The residue at position 33 (Gln-33) is a Pyrrolidone carboxylic acid. 2 cysteine pairs are disulfide-bonded: Cys-38–Cys-44 and Cys-39–Cys-46. Leu-65 carries the post-translational modification Leucine amide. Methionine amide is present on Met-96. Residues 97–130 (GRRAGAELEPHPCSGRGCPTVTTTALAPRGGSGV) constitute a propeptide that is removed on maturation.

The protein belongs to the orexin family. Specific enzymatic cleavages at paired basic residues yield the different active peptides. As to expression, restricted to neuronal cell bodies of the dorsal and lateral hypothalamus.

The protein resides in the rough endoplasmic reticulum. The protein localises to the cytoplasmic vesicle. Its subcellular location is the synapse. Functionally, neuropeptides that play a significant role in the regulation of food intake and sleep-wakefulness, possibly by coordinating the complex behavioral and physiologic responses of these complementary homeostatic functions. A broader role in the homeostatic regulation of energy metabolism, autonomic function, hormonal balance and the regulation of body fluids, is also suggested. Its function is as follows. Binds to orexin receptors HCRTR1/OX1R and HCRTR2/OX2R with a high affinity. Stimulates food intake. Modulates pituitary luteinizing hormone secretion in an ovarian steroid-dependent manner. Binds to orexin receptor HCRTR2/OX2R only. Stimulates food intake. Modulates pituitary luteinizing hormone secretion in an ovarian steroid-dependent manner. The chain is Hypocretin neuropeptide precursor (Hcrt) from Mus musculus (Mouse).